The chain runs to 481 residues: Glutamyl-tRNA(Gln) amidotransferase subunit A (481 aa).

Catalysis depends on charge relay system residues Lys74 and Ser149. Ser173 acts as the Acyl-ester intermediate in catalysis.

It belongs to the amidase family. GatA subfamily. Heterotrimer of A, B and C subunits.

It catalyses the reaction L-glutamyl-tRNA(Gln) + L-glutamine + ATP + H2O = L-glutaminyl-tRNA(Gln) + L-glutamate + ADP + phosphate + H(+). In terms of biological role, allows the formation of correctly charged Gln-tRNA(Gln) through the transamidation of misacylated Glu-tRNA(Gln) in organisms which lack glutaminyl-tRNA synthetase. The reaction takes place in the presence of glutamine and ATP through an activated gamma-phospho-Glu-tRNA(Gln). The protein is Glutamyl-tRNA(Gln) amidotransferase subunit A of Francisella tularensis subsp. mediasiatica (strain FSC147).